A 1124-amino-acid chain; its full sequence is Phytochrome A1 (1124 aa).

The span at 1–14 shows a compositional bias: low complexity; it reads MSSSRPSQSSTTSA. A disordered region spans residues 1–20; it reads MSSSRPSQSSTTSARSKHSA. The GAF domain maps to 218–401; the sequence is SMERLCDTMV…VFAIHVNKEL (184 aa). Position 323 (Cys-323) interacts with phytochromobilin. Positions 617–687 constitute a PAS 1 domain; that stretch reads VTAEMVRLIE…KMLELALQGK (71 aa). The 57-residue stretch at 690–746 folds into the PAC domain; the sequence is RNVEFEIKTHGPSGDSSPISLIVNACASRDVGDSVVGVCFIAQDITGQKNIMDKFTR. The PAS 2 domain maps to 747–821; it reads IEGDYRAIIQ…KNQEAFVNFG (75 aa). A Histidine kinase domain is found at 901–1118; the sequence is YIRRQIRNPL…TFIISVELAV (218 aa).

This sequence belongs to the phytochrome family. In terms of assembly, homodimer. Post-translationally, contains one covalently linked phytochromobilin chromophore.

In terms of biological role, regulatory photoreceptor which exists in two forms that are reversibly interconvertible by light: the Pr form that absorbs maximally in the red region of the spectrum and the Pfr form that absorbs maximally in the far-red region. Photoconversion of Pr to Pfr induces an array of morphogenic responses, whereas reconversion of Pfr to Pr cancels the induction of those responses. Pfr controls the expression of a number of nuclear genes including those encoding the small subunit of ribulose-bisphosphate carboxylase, chlorophyll A/B binding protein, protochlorophyllide reductase, rRNA, etc. It also controls the expression of its own gene(s) in a negative feedback fashion. This chain is Phytochrome A1 (PHYA1), found in Nicotiana tabacum (Common tobacco).